Consider the following 205-residue polypeptide: Carboxysome shell protein CsoS1D (205 aa).

BMC circularly permuted domains follow at residues Glu3 to Tyr100 and Val106 to Ser205. The Gates the pore signature appears at Glu68–Arg69.

It belongs to the EutL/PduB family. As to quaternary structure, homotrimer. Forms a dimer of stacked trimers, the same faces interact. Probably forms a CsoS1-CsoS1D-CsoS2 complex.

The protein resides in the carboxysome. Functionally, part of the carboxysome shell, a polyhedral inclusion where RuBisCO (ribulose bisphosphate carboxylase, cbbL-cbbS) is sequestered. It may control transport of RuBisCO reactants in and out of the carboxysome. This is Carboxysome shell protein CsoS1D from Hydrogenovibrio crunogenus (strain DSM 25203 / XCL-2) (Thiomicrospira crunogena).